Here is a 642-residue protein sequence, read N- to C-terminus: Threonine--tRNA ligase (642 aa).

The TGS domain maps to 1 to 61 (MPVITLPDGS…ETDAELSIIT (61 aa)). The tract at residues 243 to 534 (DHRKIGKQLD…LIEEYAGRFP (292 aa)) is catalytic. 3 residues coordinate Zn(2+): C334, H385, and H511.

The protein belongs to the class-II aminoacyl-tRNA synthetase family. In terms of assembly, homodimer. Zn(2+) is required as a cofactor.

The protein localises to the cytoplasm. The enzyme catalyses tRNA(Thr) + L-threonine + ATP = L-threonyl-tRNA(Thr) + AMP + diphosphate + H(+). Catalyzes the attachment of threonine to tRNA(Thr) in a two-step reaction: L-threonine is first activated by ATP to form Thr-AMP and then transferred to the acceptor end of tRNA(Thr). Also edits incorrectly charged L-seryl-tRNA(Thr). The sequence is that of Threonine--tRNA ligase from Shewanella putrefaciens (strain CN-32 / ATCC BAA-453).